A 400-amino-acid chain; its full sequence is Keratin, type I cytoskeletal 19 (400 aa).

A head region spans residues Met1–Asn79. Arg7 is modified (omega-N-methylarginine). Phosphoserine occurs at positions 14 and 22. At Arg24 the chain carries Asymmetric dimethylarginine; alternate. An Omega-N-methylarginine; alternate modification is found at Arg24. Arg32 bears the Omega-N-methylarginine mark. A phosphoserine mark is found at Ser35 and Ser40. Omega-N-methylarginine occurs at positions 43 and 51. Residues Ser57 and Ser72 each carry the phosphoserine modification. Residues Glu80 to Trp115 are coil 1A. One can recognise an IF rod domain in the interval Glu80–Tyr391. The segment at Tyr116–Thr133 is linker 1. The segment at Ile134–Leu225 is coil 1B. The interval Arg226 to Ile248 is linker 12. The tract at residues Asp244–His390 is necessary for interaction with PNN. Positions Leu249 to Gln387 are coil 2. Residue Thr323 is modified to Phosphothreonine. Residues Glu388–Leu400 form a rod-like helical tail region. Tyr391 carries the phosphotyrosine modification. Phosphoserine is present on residues Ser395 and Ser397.

Belongs to the intermediate filament family. Heterotetramer of two type I and two type II keratins. Interacts with PNN and the actin-binding domain of DMD. Interacts with HCV core protein. As to quaternary structure, (Microbial infection) Interacts with hepatitis C virus/HCV core protein. Expressed in a defined zone of basal keratinocytes in the deep outer root sheath of hair follicles. Also observed in sweat gland and mammary gland ductal and secretory cells, bile ducts, gastrointestinal tract, bladder urothelium, oral epithelia, esophagus, ectocervical epithelium (at protein level). Expressed in epidermal basal cells, in nipple epidermis and a defined region of the hair follicle. Also seen in a subset of vascular wall cells in both the veins and artery of human umbilical cord, and in umbilical cord vascular smooth muscle. Observed in muscle fibers accumulating in the costameres of myoplasm at the sarcolemma in structures that contain dystrophin and spectrin.

Functionally, involved in the organization of myofibers. Together with KRT8, helps to link the contractile apparatus to dystrophin at the costameres of striated muscle. This chain is Keratin, type I cytoskeletal 19 (KRT19), found in Homo sapiens (Human).